Reading from the N-terminus, the 240-residue chain is Fibronectin type III domain-containing protein 5 (240 aa).

A compositionally biased stretch (gly residues) spans 1 to 10 (MQAARGGAGR). The segment at 1-30 (MQAARGGAGRPGREGRGLERECERSPGVGA) is disordered. The span at 11–24 (PGREGRGLERECER) shows a compositional bias: basic and acidic residues. Residues 64-155 (APVNVTVRHL…EPVLFKTPRE (92 aa)) enclose the Fibronectin type-III domain. 2 N-linked (GlcNAc...) asparagine glycosylation sites follow: Asn67 and Asn112. Residues 181 to 201 (GEVLIIVVVLFMWAGVIALFC) traverse the membrane as a helical segment. A compositionally biased stretch (basic and acidic residues) spans 210–221 (NEPNNNKEKTKS). The segment at 210 to 240 (NEPNNNKEKTKSASETSTPEHQGGGLLRSKI) is disordered. Positions 231–240 (QGGGLLRSKI) are enriched in gly residues. Residues 238-240 (SKI) carry the Microbody targeting signal motif.

As to quaternary structure, dimer; may exist in other oligomeric forms. N-Glycosylated. In terms of processing, the extracellular domain is cleaved and released from the cell membrane.

It is found in the cell membrane. The protein resides in the peroxisome membrane. Its subcellular location is the secreted. Its function is as follows. Mediates beneficial effects of muscular exercise. Induces browning of white adipose tissue by stimulating UCP1 expression, at least in part, via the nuclear receptor PPARA. The protein is Fibronectin type III domain-containing protein 5 (Fndc5) of Rattus norvegicus (Rat).